Reading from the N-terminus, the 908-residue chain is Glutamate receptor ionotropic, kainate 2 (908 aa).

Positions methionine 1 to glycine 31 are cleaved as a signal peptide. The Extracellular segment spans residues threonine 32 to proline 561. Residues asparagine 67, asparagine 73, asparagine 275, asparagine 378, asparagine 412, asparagine 423, and asparagine 430 are each glycosylated (N-linked (GlcNAc...) asparagine). Cysteines 96 and 347 form a disulfide. L-glutamate is bound by residues proline 516, alanine 518, and arginine 523. N-linked (GlcNAc...) asparagine glycosylation is present at asparagine 546. The helical transmembrane segment at aspartate 562–alanine 582 threads the bilayer. Residues arginine 583–glycine 638 are Cytoplasmic-facing. The helical transmembrane segment at isoleucine 639–leucine 659 threads the bilayer. Residues threonine 660–asparagine 819 lie on the Extracellular side of the membrane. Residues alanine 689, threonine 690, and glutamate 738 each coordinate L-glutamate. An intrachain disulfide couples cysteine 750 to cysteine 804. N-linked (GlcNAc...) asparagine glycosylation occurs at asparagine 751. A helical membrane pass occupies residues isoleucine 820 to glycine 840. Topologically, residues glutamate 841–alanine 908 are cytoplasmic. Phosphoserine; by PKC is present on residues serine 846 and serine 868. Residue lysine 886 forms a Glycyl lysine isopeptide (Lys-Gly) (interchain with G-Cter in SUMO1) linkage.

It belongs to the glutamate-gated ion channel (TC 1.A.10.1) family. GRIK2 subfamily. In terms of assembly, homotetramer and heterotetramer with GRIK5. Tetramers may be formed by the dimerization of dimers. Assembles into a kainate-gated homomeric channel that does not bind AMPA. Can form functional heteromeric receptors with GRIK3, GRIK4 and GRIK5. Interacts with NETO2. Interacts with DLG4. Interacts with NETO2. Interacts (via C-terminus) with KLHL17 (via kelch repeats); the interaction targets GRIK2 for degradation via ubiquitin-proteasome pathway. In terms of processing, sumoylation mediates kainate receptor-mediated endocytosis and regulates synaptic transmission. Sumoylation is enhanced by PIAS3 and desumoylated by SENP1. Ubiquitinated. Ubiquitination regulates the GRIK2 levels at the synapse by leading kainate receptor degradation through proteasome. Post-translationally, phosphorylated by PKC at Ser-868 upon agonist activation, this directly enhance sumoylation.

The protein resides in the cell membrane. It is found in the postsynaptic cell membrane. It catalyses the reaction Ca(2+)(in) = Ca(2+)(out). It carries out the reaction Na(+)(in) = Na(+)(out). Its activity is regulated as follows. Cold receptor activity activated by temperatures between 10-19 degrees Celsius. In terms of biological role, ionotropic glutamate receptor that functions as a cation-permeable ligand-gated ion channel, gated by L-glutamate and the glutamatergic agonist kainic acid. L-glutamate acts as an excitatory neurotransmitter at many synapses in the central nervous system. Binding of the excitatory neurotransmitter L-glutamate induces a conformation change, leading to the opening of the cation channel, and thereby converts the chemical signal to an electrical impulse. The receptor then desensitizes rapidly and enters a transient inactive state, characterized by the presence of bound agonist. Modulates cell surface expression of NETO2. In association with GRIK3, involved in presynaptic facilitation of glutamate release at hippocampal mossy fiber synapses. Functionally, independent of its ionotropic glutamate receptor activity, acts as a thermoreceptor conferring sensitivity to cold temperatures. Functions in dorsal root ganglion neurons. This is Glutamate receptor ionotropic, kainate 2 (GRIK2) from Macaca fascicularis (Crab-eating macaque).